We begin with the raw amino-acid sequence, 674 residues long: Pesticidal crystal protein Cry24Aa (674 aa).

Belongs to the delta endotoxin family.

In terms of biological role, promotes colloidosmotic lysis by binding to the midgut epithelial cells of insects. The sequence is that of Pesticidal crystal protein Cry24Aa (cry24Aa) from Bacillus thuringiensis subsp. jegathesan.